Reading from the N-terminus, the 447-residue chain is GTPase Der (447 aa).

EngA-type G domains lie at 3–167 and 181–354; these read PVVA…NLPD and IKLA…KSAT. GTP-binding positions include 9–16, 56–60, 119–122, 187–194, 234–238, and 299–302; these read GRPNVGKS, DTGGF, NKAE, DTAGL, and NKWD. Residues 355 to 439 enclose the KH-like domain; the sequence is RKMSTPVLTR…PLRIQFKSSQ (85 aa).

Belongs to the TRAFAC class TrmE-Era-EngA-EngB-Septin-like GTPase superfamily. EngA (Der) GTPase family. Associates with the 50S ribosomal subunit.

Functionally, GTPase that plays an essential role in the late steps of ribosome biogenesis. The polypeptide is GTPase Der (Variovorax paradoxus (strain S110)).